Here is a 497-residue protein sequence, read N- to C-terminus: Probable malate:quinone oxidoreductase (497 aa).

This sequence belongs to the MQO family. FAD is required as a cofactor.

The enzyme catalyses (S)-malate + a quinone = a quinol + oxaloacetate. The protein operates within carbohydrate metabolism; tricarboxylic acid cycle; oxaloacetate from (S)-malate (quinone route): step 1/1. The chain is Probable malate:quinone oxidoreductase from Rhodopseudomonas palustris (strain ATCC BAA-98 / CGA009).